The primary structure comprises 444 residues: Methylenetetrahydrofolate--tRNA-(uracil-5-)-methyltransferase TrmFO (444 aa).

An FAD-binding site is contributed by 10–15 (GAGLAG).

It belongs to the MnmG family. TrmFO subfamily. FAD serves as cofactor.

It localises to the cytoplasm. The catalysed reaction is uridine(54) in tRNA + (6R)-5,10-methylene-5,6,7,8-tetrahydrofolate + NADH + H(+) = 5-methyluridine(54) in tRNA + (6S)-5,6,7,8-tetrahydrofolate + NAD(+). The enzyme catalyses uridine(54) in tRNA + (6R)-5,10-methylene-5,6,7,8-tetrahydrofolate + NADPH + H(+) = 5-methyluridine(54) in tRNA + (6S)-5,6,7,8-tetrahydrofolate + NADP(+). In terms of biological role, catalyzes the folate-dependent formation of 5-methyl-uridine at position 54 (M-5-U54) in all tRNAs. The polypeptide is Methylenetetrahydrofolate--tRNA-(uracil-5-)-methyltransferase TrmFO (Streptococcus pneumoniae (strain ATCC 700669 / Spain 23F-1)).